Here is a 150-residue protein sequence, read N- to C-terminus: D-aminoacyl-tRNA deacylase (150 aa).

A Gly-cisPro motif, important for rejection of L-amino acids motif is present at residues 133 to 134; sequence GP.

Belongs to the DTD family. In terms of assembly, homodimer.

Its subcellular location is the cytoplasm. The catalysed reaction is glycyl-tRNA(Ala) + H2O = tRNA(Ala) + glycine + H(+). The enzyme catalyses a D-aminoacyl-tRNA + H2O = a tRNA + a D-alpha-amino acid + H(+). Functionally, an aminoacyl-tRNA editing enzyme that deacylates mischarged D-aminoacyl-tRNAs. Also deacylates mischarged glycyl-tRNA(Ala), protecting cells against glycine mischarging by AlaRS. Acts via tRNA-based rather than protein-based catalysis; rejects L-amino acids rather than detecting D-amino acids in the active site. By recycling D-aminoacyl-tRNA to D-amino acids and free tRNA molecules, this enzyme counteracts the toxicity associated with the formation of D-aminoacyl-tRNA entities in vivo and helps enforce protein L-homochirality. This chain is D-aminoacyl-tRNA deacylase, found in Kocuria rhizophila (strain ATCC 9341 / DSM 348 / NBRC 103217 / DC2201).